A 197-amino-acid chain; its full sequence is 7-methyl-GTP pyrophosphatase (197 aa).

The active-site Proton acceptor is aspartate 69.

The protein belongs to the Maf family. YceF subfamily. Requires a divalent metal cation as cofactor.

Its subcellular location is the cytoplasm. The catalysed reaction is N(7)-methyl-GTP + H2O = N(7)-methyl-GMP + diphosphate + H(+). Functionally, nucleoside triphosphate pyrophosphatase that hydrolyzes 7-methyl-GTP (m(7)GTP). May have a dual role in cell division arrest and in preventing the incorporation of modified nucleotides into cellular nucleic acids. This is 7-methyl-GTP pyrophosphatase from Syntrophotalea carbinolica (strain DSM 2380 / NBRC 103641 / GraBd1) (Pelobacter carbinolicus).